The following is a 167-amino-acid chain: RNA pyrophosphohydrolase (167 aa).

A Nudix hydrolase domain is found at 8–158 (PYRTCVGMML…KRPVYERVVK (151 aa)). The short motif at 47-68 (GGVDPGEDTWEAAKRELYEETN) is the Nudix box element.

It belongs to the Nudix hydrolase family. RppH subfamily. Requires a divalent metal cation as cofactor.

Functionally, accelerates the degradation of transcripts by removing pyrophosphate from the 5'-end of triphosphorylated RNA, leading to a more labile monophosphorylated state that can stimulate subsequent ribonuclease cleavage. This chain is RNA pyrophosphohydrolase, found in Rhodopseudomonas palustris (strain HaA2).